A 204-amino-acid polypeptide reads, in one-letter code: Proteasome subunit beta type-3-B (204 aa).

Belongs to the peptidase T1B family. Component of the 20S core complex of the 26S proteasome. The 26S proteasome is composed of a core protease (CP), known as the 20S proteasome, capped at one or both ends by the 19S regulatory particle (RP/PA700). The 20S proteasome core is composed of 28 subunits that are arranged in four stacked rings, resulting in a barrel-shaped structure. The two end rings are each formed by seven alpha subunits, and the two central rings are each formed by seven beta subunits. The catalytic chamber with the active sites is on the inside of the barrel.

Its subcellular location is the cytoplasm. The protein localises to the nucleus. Non-catalytic component of the proteasome, a multicatalytic proteinase complex which is characterized by its ability to cleave peptides with Arg, Phe, Tyr, Leu, and Glu adjacent to the leaving group at neutral or slightly basic pH. The proteasome has an ATP-dependent proteolytic activity. The polypeptide is Proteasome subunit beta type-3-B (PBC2) (Arabidopsis thaliana (Mouse-ear cress)).